A 117-amino-acid chain; its full sequence is Large ribosomal subunit protein bL17 (117 aa).

It belongs to the bacterial ribosomal protein bL17 family. Part of the 50S ribosomal subunit. Contacts protein L32.

The protein is Large ribosomal subunit protein bL17 of Campylobacter lari (strain RM2100 / D67 / ATCC BAA-1060).